Here is a 612-residue protein sequence, read N- to C-terminus: Bile salt-activated lipase (612 aa).

The signal sequence occupies residues Met-1–Ala-20. An intrachain disulfide couples Cys-84 to Cys-100. A glycan (N-linked (GlcNAc...) asparagine) is linked at Asn-207. The active-site Acyl-ester intermediate is the Ser-214. Cys-266 and Cys-277 are joined by a disulfide. Residues Asp-340 and His-455 each act as charge relay system in the active site. The disordered stretch occupies residues Val-553–Phe-612. 4 repeat units span residues His-556–Ala-566, Pro-567–Gly-577, Pro-578–Thr-588, and Pro-589–Gly-599. Residues His-556–Gly-599 are 4 X 11 AA tandem repeats, O-glycosylated region. Residues Asp-583–Gly-599 show a composition bias toward polar residues.

Belongs to the type-B carboxylesterase/lipase family. Interacts with CLC. As to expression, synthesized primarily in the pancreas and then transported to the intestine.

The protein resides in the secreted. It catalyses the reaction a triacylglycerol + H2O = a diacylglycerol + a fatty acid + H(+). The enzyme catalyses 1,2,3-tri-(9Z-octadecenoyl)-glycerol + H2O = di-(9Z)-octadecenoylglycerol + (9Z)-octadecenoate + H(+). It carries out the reaction 1,2,3-trioctanoylglycerol + H2O = dioctanoylglycerol + octanoate + H(+). The catalysed reaction is a sterol ester + H2O = a sterol + a fatty acid + H(+). It catalyses the reaction cholesteryl (9Z-octadecenoate) + H2O = cholesterol + (9Z)-octadecenoate + H(+). The enzyme catalyses an acetyl ester + H2O = an aliphatic alcohol + acetate + H(+). It carries out the reaction a butanoate ester + H2O = an aliphatic alcohol + butanoate + H(+). The catalysed reaction is 9-hexadecanoyloxy-octadecanoate + H2O = 9-hydroxy-octadecanoate + hexadecanoate + H(+). It catalyses the reaction 9-(9Z-octadecenoyloxy)-octadecanoate + H2O = 9-hydroxy-octadecanoate + (9Z)-octadecenoate + H(+). The enzyme catalyses 1-hexadecanoyl-sn-glycero-3-phosphocholine + H2O = sn-glycerol 3-phosphocholine + hexadecanoate + H(+). It carries out the reaction 12-hexadecanoyloxy-octadecanoate + H2O = 12-hydroxyoctadecanoate + hexadecanoate + H(+). The catalysed reaction is 12-(9Z-octadecenoyloxy)-octadecanoate + H2O = 12-hydroxyoctadecanoate + (9Z)-octadecenoate + H(+). It catalyses the reaction 13-(9Z-octadecenoyloxy)-octadecanoate + H2O = 13-hydroxy-octadecanoate + (9Z)-octadecenoate + H(+). The enzyme catalyses 9-(9Z-hexadecenoyloxy)-octadecanoate + H2O = (9Z)-hexadecenoate + 9-hydroxy-octadecanoate + H(+). It carries out the reaction 12-(9Z-hexadecenoyloxy)-octadecanoate + H2O = 12-hydroxyoctadecanoate + (9Z)-hexadecenoate + H(+). The catalysed reaction is 13-(9Z-hexadecenoyloxy)-octadecanoate + H2O = 13-hydroxy-octadecanoate + (9Z)-hexadecenoate + H(+). It catalyses the reaction 12-octadecanoyloxy-octadecanoate + H2O = 12-hydroxyoctadecanoate + octadecanoate + H(+). The enzyme catalyses 13-octadecanoyloxy-octadecanoate + H2O = 13-hydroxy-octadecanoate + octadecanoate + H(+). It carries out the reaction 5-(9Z-hexadecenoyloxy)-octadecanoate + H2O = 5-hydroxy-octadecanoate + (9Z)-hexadecenoate + H(+). The catalysed reaction is 9-octadecanoyloxy-octadecanoate + H2O = 9-hydroxy-octadecanoate + octadecanoate + H(+). Activated by bile salts such as sodium taurocholate. Its function is as follows. Catalyzes the hydrolysis of a wide range of substrates including cholesteryl esters, phospholipids, lysophospholipids, di- and tri-acylglycerols, and fatty acid esters of hydroxy fatty acids (FAHFA). Preferentially hydrolyzes FAHFAs with the ester bond further away from the carboxylate. Unsaturated FAHFAs are hydrolyzed more quickly than saturated FAHFAs. Has an essential role in the complete digestion of dietary lipids and their intestinal absorption, along with the absorption of fat-soluble vitamins. This chain is Bile salt-activated lipase (Cel), found in Rattus norvegicus (Rat).